The following is a 296-amino-acid chain: MTNRIPIASPVRTAAIVNRYFVHAKKNLGQNFLVDLDAVQGIVRAAGIEPGDQVVEVGPGIGSLTEQLLLAGGKVAAYEVDQSLPEILANELPEKVDGQDLDQRFKLIMKDVLKADFATDLAGFFDLSKPVKVVANLPYYITTPIIFNLLESSLDFTSLTLMMQKEVAERLAAQPGSKAYGPLSIAVQTQMSVDLALEVGHASFMPQPKVDSAVVVLTPLEKPADVGDRKQFNRVVKLCFAQRRKTLANNLKTLLPDKEDREKLLADLDLDPRQRPEQLAISDFIRISQAIAEMNK.

N31, L33, G58, E79, D111, and N136 together coordinate S-adenosyl-L-methionine.

The protein belongs to the class I-like SAM-binding methyltransferase superfamily. rRNA adenine N(6)-methyltransferase family. RsmA subfamily.

Its subcellular location is the cytoplasm. The enzyme catalyses adenosine(1518)/adenosine(1519) in 16S rRNA + 4 S-adenosyl-L-methionine = N(6)-dimethyladenosine(1518)/N(6)-dimethyladenosine(1519) in 16S rRNA + 4 S-adenosyl-L-homocysteine + 4 H(+). Specifically dimethylates two adjacent adenosines (A1518 and A1519) in the loop of a conserved hairpin near the 3'-end of 16S rRNA in the 30S particle. May play a critical role in biogenesis of 30S subunits. The chain is Ribosomal RNA small subunit methyltransferase A from Lactobacillus delbrueckii subsp. bulgaricus (strain ATCC BAA-365 / Lb-18).